The sequence spans 166 residues: Endoribonuclease YbeY (166 aa).

3 residues coordinate Zn(2+): His-132, His-136, and His-142.

This sequence belongs to the endoribonuclease YbeY family. Zn(2+) is required as a cofactor.

The protein resides in the cytoplasm. Functionally, single strand-specific metallo-endoribonuclease involved in late-stage 70S ribosome quality control and in maturation of the 3' terminus of the 16S rRNA. The protein is Endoribonuclease YbeY of Clostridium botulinum (strain Loch Maree / Type A3).